Reading from the N-terminus, the 390-residue chain is GDSL esterase/lipase At1g28640 (390 aa).

The N-terminal stretch at 1-26 (MASSLEKLISSFLLVLYSTTIIVASS) is a signal peptide. The Nucleophile role is filled by serine 42. Asparagine 105, asparagine 138, and asparagine 321 each carry an N-linked (GlcNAc...) asparagine glycan. Catalysis depends on residues aspartate 346 and histidine 349. N-linked (GlcNAc...) asparagine glycosylation occurs at asparagine 364.

Belongs to the 'GDSL' lipolytic enzyme family.

Its subcellular location is the secreted. The sequence is that of GDSL esterase/lipase At1g28640 from Arabidopsis thaliana (Mouse-ear cress).